The primary structure comprises 391 residues: MVTQNKKILIITGSFGNGHMQVTQSIVNQLNDMNLDHLSVIEHDLFMEAHPILTSICKKWYINSFKYFRNMYKGFYYSRPDKLDKCFYKYYGLNKLINLLIKEKPDLILLTFPTPVMSVLTEQFNINIPVATVMTDYRLHKNWITPYSTRYYVATKETKQDFIDVGIDPSTVKVTGIPIDNKFETPINQKQWLIDNNLDPDKQTILMSAGAFGVSKGFDTMITDILAKSANAQVVMICGKSKELKRSLTAKFKSNENVLILGYTKHMNEWMASSQLMITKPGGITITEGFARCIPMIFLNPAPGQELENALYFEEKGFGKIADTPEEAIKIVASLTNGNEQLTNMISTMEQDKIKYATQTICRDLLDLIGHSSQPQEIYGKVPLYARFFVK.

It belongs to the glycosyltransferase 28 family. UgtP subfamily.

Its subcellular location is the cell membrane. The catalysed reaction is a 1,2-diacyl-3-O-(beta-D-glucopyranosyl)-sn-glycerol + UDP-alpha-D-glucose = a 1,2-diacyl-3-O-(beta-D-Glc-(1-&gt;6)-beta-D-Glc)-sn-glycerol + UDP + H(+). It catalyses the reaction a 1,2-diacyl-sn-glycerol + UDP-alpha-D-glucose = a 1,2-diacyl-3-O-(beta-D-glucopyranosyl)-sn-glycerol + UDP + H(+). Its pathway is glycolipid metabolism; diglucosyl-diacylglycerol biosynthesis. Functionally, processive glucosyltransferase involved in the biosynthesis of both the bilayer- and non-bilayer-forming membrane glucolipids. Is able to successively transfer two glucosyl residues to diacylglycerol (DAG), thereby catalyzing the formation of beta-monoglucosyl-DAG (3-O-(beta-D-glucopyranosyl)-1,2-diacyl-sn-glycerol) and beta-diglucosyl-DAG (3-O-(beta-D-glucopyranosyl-beta-(1-&gt;6)-D-glucopyranosyl)-1,2-diacyl-sn-glycerol). Beta-diglucosyl-DAG is the predominant glycolipid found in Bacillales and is also used as a membrane anchor for lipoteichoic acid (LTA). This is Processive diacylglycerol beta-glucosyltransferase from Staphylococcus aureus (strain MW2).